Here is a 363-residue protein sequence, read N- to C-terminus: UDP-N-acetylglucosamine--N-acetylmuramyl-(pentapeptide) pyrophosphoryl-undecaprenol N-acetylglucosamine transferase (363 aa).

Residues 14–16 (TGG), asparagine 122, arginine 163, serine 190, and glutamine 285 contribute to the UDP-N-acetyl-alpha-D-glucosamine site.

It belongs to the glycosyltransferase 28 family. MurG subfamily.

It is found in the cell inner membrane. It catalyses the reaction di-trans,octa-cis-undecaprenyl diphospho-N-acetyl-alpha-D-muramoyl-L-alanyl-D-glutamyl-meso-2,6-diaminopimeloyl-D-alanyl-D-alanine + UDP-N-acetyl-alpha-D-glucosamine = di-trans,octa-cis-undecaprenyl diphospho-[N-acetyl-alpha-D-glucosaminyl-(1-&gt;4)]-N-acetyl-alpha-D-muramoyl-L-alanyl-D-glutamyl-meso-2,6-diaminopimeloyl-D-alanyl-D-alanine + UDP + H(+). Its pathway is cell wall biogenesis; peptidoglycan biosynthesis. Functionally, cell wall formation. Catalyzes the transfer of a GlcNAc subunit on undecaprenyl-pyrophosphoryl-MurNAc-pentapeptide (lipid intermediate I) to form undecaprenyl-pyrophosphoryl-MurNAc-(pentapeptide)GlcNAc (lipid intermediate II). This chain is UDP-N-acetylglucosamine--N-acetylmuramyl-(pentapeptide) pyrophosphoryl-undecaprenol N-acetylglucosamine transferase, found in Prochlorococcus marinus (strain MIT 9312).